The primary structure comprises 2370 residues: Genome polyprotein (2370 aa).

A lipid anchor (N-myristoyl glycine; by host) is attached at G112. Disordered regions lie at residues 140–173 (VGDMPTASSSEAPLGSNKGGSSTSPKSTSNGNVV) and 704–736 (GADGAEVQPAPTSDLSDGNPTTDPAPRDNFDYP). Over residues 154–171 (GSNKGGSSTSPKSTSNGN) the composition is skewed to low complexity. Residues 713–725 (APTSDLSDGNPTT) show a composition bias toward polar residues. The SF3 helicase domain maps to 1358–1522 (YSTALSAISL…AAFSAAAALK (165 aa)). Residue 1384–1391 (GPPGTGKS) participates in ATP binding. G1597 carries the N-myristoyl glycine; by host lipid modification. Residues 1646–1666 (IFAASSFLSLIAATLTIVRCL) form a helical membrane-spanning segment. A disordered region spans residues 1674 to 1696 (GAYSGTPVPKPRKKDLPKQPVYS). Y1676 carries the post-translational modification O-(5'-phospho-RNA)-tyrosine. The region spanning 1697–1886 (GPVRRQGFDP…FSARLTPERV (190 aa)) is the Peptidase C3 domain. Catalysis depends on for protease 3C activity residues H1745, E1776, and C1849. Residues 2007-2016 (SPGYPWTTQG) are compositionally biased toward polar residues. The interval 2007–2026 (SPGYPWTTQGRSRRSLFDED) is disordered. The RdRp catalytic domain maps to 2122 to 2239 (SNVWSIDYSC…GSNQDFHPRE (118 aa)). Residues D2128 and D2225 each act as for RdRp activity in the active site.

Interacts with capsid protein VP1. Interacts with capsid protein VP3. In terms of assembly, interacts with capsid protein VP0. Interacts with capsid protein VP3. As to quaternary structure, interacts with capsid protein VP0. Interacts with capsid protein VP1. Homodimer. Interacts with protein 2B. Interacts with protein 2C. In terms of assembly, homodimer. Interacts with host ABCD3. Interacts with protein 2A. Interacts with host ACBD3. As to quaternary structure, homodimer. Interacts with host ABCD3. Interacts with protein 2A. Interacts with protein 3A. Interacts with protein 3C. Interacts with host ACBD3. Homodimer. Interacts with host ABCD3 (via GOLD domain) and PI4KB; these interactions allow the formation of a viral protein/ACBD3/PI4KB complex in order to synthesize PI4P at the viral RNA replication sites. Interacts with protein 2C. Interacts with protein 3C. Protein 3C: Interacts with protein 2A. Protein 3C: Interacts with protein 2C. In terms of processing, specific enzymatic cleavages by the viral protease in vivo yield a variety of precursors and mature proteins. The leader protein-VP0 junction is cleaved by 3C proteinase. The VP1/2A junction is cleaved by the protein 3CD in association with protein 2A. Uridylylated by the polymerase and is covalently linked to the 5'-end of genomic RNA. This uridylylated form acts as a nucleotide-peptide primer for the polymerase.

It is found in the virion. Its subcellular location is the host cytoplasm. The protein localises to the host cytoplasmic vesicle membrane. It localises to the host Golgi apparatus membrane. It catalyses the reaction RNA(n) + a ribonucleoside 5'-triphosphate = RNA(n+1) + diphosphate. The catalysed reaction is Selective cleavage of Gln-|-Gly bond in the poliovirus polyprotein. In other picornavirus reactions Glu may be substituted for Gln, and Ser or Thr for Gly.. The enzyme catalyses ATP + H2O = ADP + phosphate + H(+). Its function is as follows. Required for viral RNA replication and viral RNA encapsidation. Does not have any proteolytic activity. Forms an icosahedral capsid of pseudo T=3 symmetry with capsid proteins VP0 and VP3. Together they form an icosahedral capsid composed of 60 copies of each VP0, VP1, and VP3. All the three latter proteins contain a beta-sheet structure called beta-barrel jelly roll. Functionally, forms an icosahedral capsid of pseudo T=3 symmetry with capsid proteins VP1 and VP3. Together they form an icosahedral capsid composed of 60 copies of each VP0, VP1, and VP3. All the three latter proteins contain a beta-sheet structure called beta-barrel jelly roll. In terms of biological role, forms an icosahedral capsid of pseudo T=3 symmetry with capsid proteins VP0 and VP1. Together they form an icosahedral capsid composed of 60 copies of each VP0, VP1, and VP3. All the three latter proteins contain a beta-sheet structure called beta-barrel jelly roll. Its function is as follows. Required for viral RNA replication. Does not have any proteolytic activity. Affects membrane integrity and causes an increase in membrane permeability. Functionally, induces and associates with structural rearrangements of intracellular membranes. Displays RNA-binding, nucleotide binding and NTPase activities. May play a role in virion morphogenesis and viral RNA encapsidation by interacting with the capsid protein VP3. In terms of biological role, serves as membrane anchor via its hydrophobic domain. Plays an essential role in viral RNA replication by recruiting PI4KB at the viral replication sites, thereby allowing the formation of rearranged membranous structures where viral replication takes place. Its function is as follows. Forms a primer, VPg-pU, which is utilized by the polymerase for the initiation of RNA chains. Cysteine protease that generates mature viral proteins from the precursor polyprotein. In addition to its proteolytic activity, it binds to viral RNA, and thus influences viral genome replication. RNA and substrate cooperatively bind to the protease. Functionally, replicates the genomic and antigenomic RNAs by recognizing replications specific signals. Performs VPg uridylylation. In Homo sapiens (Human), this protein is Genome polyprotein.